A 129-amino-acid polypeptide reads, in one-letter code: Glycine cleavage system H protein (129 aa).

The region spanning 24–106 (SYTVGITEHA…YGEGWFFRVM (83 aa)) is the Lipoyl-binding domain. Residue Lys65 is modified to N6-lipoyllysine.

Belongs to the GcvH family. As to quaternary structure, the glycine cleavage system is composed of four proteins: P, T, L and H. It depends on (R)-lipoate as a cofactor.

In terms of biological role, the glycine cleavage system catalyzes the degradation of glycine. The H protein shuttles the methylamine group of glycine from the P protein to the T protein. This chain is Glycine cleavage system H protein, found in Shewanella baltica (strain OS185).